Here is a 143-residue protein sequence, read N- to C-terminus: Large ribosomal subunit protein uL15 (143 aa).

Positions 20–52 (GRGIGSGKGKTAGRGHKGQHSRAGGYHKVGFEG) are disordered. A compositionally biased stretch (basic residues) spans 30–39 (TAGRGHKGQH).

The protein belongs to the universal ribosomal protein uL15 family. As to quaternary structure, part of the 50S ribosomal subunit.

Its function is as follows. Binds to the 23S rRNA. The chain is Large ribosomal subunit protein uL15 from Coxiella burnetii (strain CbuG_Q212) (Coxiella burnetii (strain Q212)).